The chain runs to 84 residues: U4-theraphotoxin-Hhn1a (84 aa).

A signal peptide spans 1-22 (MKVTLIAILTCAAVLVLHTTAA). Residues 23-47 (EELEESQLMEVGMPDTELAAVDEER) constitute a propeptide that is removed on maturation. Intrachain disulfides connect C51-C65, C55-C76, and C70-C81.

The protein belongs to the neurotoxin 12 (Hwtx-2) family. 02 (Hwtx-2) subfamily. As to expression, expressed by the venom gland.

It localises to the secreted. Its function is as follows. Postsynaptic neurotoxin. The sequence is that of U4-theraphotoxin-Hhn1a from Cyriopagopus hainanus (Chinese bird spider).